Reading from the N-terminus, the 254-residue chain is Alcohol dehydrogenase (254 aa).

10-33 (FVAGLGGIGLDTSRELVKRDLKNL) provides a ligand contact to NAD(+). A substrate-binding site is contributed by serine 138. Tyrosine 151 functions as the Proton acceptor in the catalytic mechanism.

It belongs to the short-chain dehydrogenases/reductases (SDR) family. In terms of assembly, homodimer.

It carries out the reaction a primary alcohol + NAD(+) = an aldehyde + NADH + H(+). The enzyme catalyses a secondary alcohol + NAD(+) = a ketone + NADH + H(+). The chain is Alcohol dehydrogenase (Adh) from Drosophila guanche (Fruit fly).